The primary structure comprises 167 residues: MAGLWKTFVLVVALAVVSCEALRQLRYEEIVDRAIEAYNQGRQGRPLFRLLSATPPSSQNPATNIPLQFRIKETECTSTQERQPKDCDFLEDGEERNCTGKFFRRRQSTSLTLTCDRDCSREDTQETSFNDKQDVSEKEKFEDVPPHIRNIYEDAKYDIIGNILKNF.

The first 21 residues, 1-21 (MAGLWKTFVLVVALAVVSCEA), serve as a signal peptide directing secretion. The tract at residues 122–141 (EDTQETSFNDKQDVSEKEKF) is disordered.

This sequence belongs to the cathelicidin family. As to quaternary structure, monomer. Homodimer; disulfide-linked. Expressed in myeloid bone marrow cells. Expressed in neutrophilic precursors (at protein level). Expressed in myeloid bone marrow cells.

The protein resides in the secreted. It is found in the cytoplasmic granule. Its function is as follows. Acts as an inhibitor of cathepsin B (CTSB) activity. Plays a role as a negative regulator of tumor vascular development, cell invasion and metastasis. This Mus musculus (Mouse) protein is Neutrophilic granule protein.